We begin with the raw amino-acid sequence, 39 residues long: Photosystem II reaction center protein J (39 aa).

A helical transmembrane segment spans residues 7–27; that stretch reads IPLWIVATVAGTGALVVVGLF.

The protein belongs to the PsbJ family. In terms of assembly, PSII is composed of 1 copy each of membrane proteins PsbA, PsbB, PsbC, PsbD, PsbE, PsbF, PsbH, PsbI, PsbJ, PsbK, PsbL, PsbM, PsbT, PsbX, PsbY, PsbZ, Psb30/Ycf12, peripheral proteins PsbO, CyanoQ (PsbQ), PsbU, PsbV and a large number of cofactors. It forms dimeric complexes.

The protein localises to the cellular thylakoid membrane. Functionally, one of the components of the core complex of photosystem II (PSII). PSII is a light-driven water:plastoquinone oxidoreductase that uses light energy to abstract electrons from H(2)O, generating O(2) and a proton gradient subsequently used for ATP formation. It consists of a core antenna complex that captures photons, and an electron transfer chain that converts photonic excitation into a charge separation. This is Photosystem II reaction center protein J from Synechococcus sp. (strain ATCC 27144 / PCC 6301 / SAUG 1402/1) (Anacystis nidulans).